We begin with the raw amino-acid sequence, 245 residues long: AP-1-like transcription factor YAP7 (245 aa).

Positions 1–144 (MRQRRSVVAV…NRDAQRAYRE (144 aa)) are disordered. Over residues 74–94 (SANNDGSSKIKKVQTSNQKDQ) the composition is skewed to polar residues. 2 stretches are compositionally biased toward basic and acidic residues: residues 95-114 (MTTK…KSDD) and 135-144 (NRDAQRAYRE). Residues 125–188 (VDSVEKRRRQ…SDTKENLQKS (64 aa)) enclose the bZIP domain. Residues 130 to 149 (KRRRQNRDAQRAYRERRTTR) are basic motif. The interval 153-181 (LEEKVEMLHNLVDDWQRKYKLLESEFSDT) is leucine-zipper.

It belongs to the bZIP family. YAP subfamily. As to quaternary structure, homodimer.

The protein resides in the nucleus. Functionally, probable transcription activator linked to cell cycle that induces transcription activation of genes in the environmental stress response and metabolism control pathways, like the closely related YAP5. In Saccharomyces cerevisiae (strain ATCC 204508 / S288c) (Baker's yeast), this protein is AP-1-like transcription factor YAP7 (YAP7).